The sequence spans 716 residues: Photosystem I P700 chlorophyll a apoprotein A1 (716 aa).

Helical transmembrane passes span 57–80 (VFSA…FHGA), 143–166 (LYCT…FHYH), 182–206 (LNHH…HVSL), 278–296 (TVHH…GHMY), 333–356 (WHAQ…HHMY), 372–398 (LSLF…IFMV), 420–442 (AIIS…LYIH), and 518–536 (FLVH…LILL). Residues C560 and C569 each contribute to the [4Fe-4S] cluster site. A run of 2 helical transmembrane segments spans residues 576-597 (HVFL…HFSW) and 651-673 (LSAY…MFLF). H662 is a binding site for chlorophyll a'. Residues M670 and Y678 each coordinate chlorophyll a. Residue W679 participates in phylloquinone binding. A helical membrane pass occupies residues 711–716 (AVGVAH).

It belongs to the PsaA/PsaB family. The PsaA/B heterodimer binds the P700 chlorophyll special pair and subsequent electron acceptors. PSI consists of a core antenna complex that captures photons, and an electron transfer chain that converts photonic excitation into a charge separation. The eukaryotic PSI reaction center is composed of at least 11 subunits. P700 is a chlorophyll a/chlorophyll a' dimer, A0 is one or more chlorophyll a, A1 is one or both phylloquinones and FX is a shared 4Fe-4S iron-sulfur center. serves as cofactor.

It is found in the plastid. The protein resides in the chloroplast thylakoid membrane. The enzyme catalyses reduced [plastocyanin] + hnu + oxidized [2Fe-2S]-[ferredoxin] = oxidized [plastocyanin] + reduced [2Fe-2S]-[ferredoxin]. Functionally, psaA and PsaB bind P700, the primary electron donor of photosystem I (PSI), as well as the electron acceptors A0, A1 and FX. PSI is a plastocyanin-ferredoxin oxidoreductase, converting photonic excitation into a charge separation, which transfers an electron from the donor P700 chlorophyll pair to the spectroscopically characterized acceptors A0, A1, FX, FA and FB in turn. Oxidized P700 is reduced on the lumenal side of the thylakoid membrane by plastocyanin. This is Photosystem I P700 chlorophyll a apoprotein A1 from Araucaria araucana (Monkey-puzzle tree).